Here is an 898-residue protein sequence, read N- to C-terminus: Nitrate reductase [NAD(P)H] (898 aa).

The span at 1 to 15 (MAASVENRRFTHHEP) shows a compositional bias: basic and acidic residues. The interval 1–65 (MAASVENRRF…SSSEDENEND (65 aa)) is disordered. Cys-180 lines the Mo-molybdopterin pocket. The Cytochrome b5 heme-binding domain maps to 528-603 (SKMFSMSEVK…LEDYRIGELI (76 aa)). Heme contacts are provided by His-563 and His-586. The region spanning 642-754 (GAKIPTKLVY…KGPLGHVEYT (113 aa)) is the FAD-binding FR-type domain. FAD-binding positions include 694-697 (RAYT), 711-715 (VVKIY), Phe-716, Phe-723, 728-730 (LMS), and Thr-781.

Belongs to the nitrate reductase family. As to quaternary structure, homodimer. FAD is required as a cofactor. The cofactor is heme. Mo-molybdopterin serves as cofactor.

It carries out the reaction nitrite + NAD(+) + H2O = nitrate + NADH + H(+). The enzyme catalyses nitrite + NADP(+) + H2O = nitrate + NADPH + H(+). Nitrate reductase is a key enzyme involved in the first step of nitrate assimilation in plants, fungi and bacteria. The polypeptide is Nitrate reductase [NAD(P)H] (NIA1) (Betula pendula (European white birch)).